The chain runs to 280 residues: Nucleotide-binding protein Mfla_0145 (280 aa).

8 to 15 (GLSGSGKS) contributes to the ATP binding site. GTP is bound at residue 57–60 (DTRS).

It belongs to the RapZ-like family.

In terms of biological role, displays ATPase and GTPase activities. The polypeptide is Nucleotide-binding protein Mfla_0145 (Methylobacillus flagellatus (strain ATCC 51484 / DSM 6875 / VKM B-1610 / KT)).